The following is a 362-amino-acid chain: MNTFGTRLKFTSFGESHGVAVGCIIDGMPAGVKFDEEFLQNELDKRKGGSKFATPRKESDKAQVLSGVFEGYTTGHPIAIVVFNENAHSKDYDNLKDLFRPAHADFTYFYKYGIRDHRGGGRSSARESVARVAGGAVAAMLLREFDICVQSGVFGVGTFVSNLKEEEFDFEFAKKSEIFCLDPKLESDFKNEILNARNSKDSVGAAVFTKVSGMLVGLGEVLYDKLDSKLAHALMGINAVKAVEIGEGINASKMRGSCHNDALKDGKFLSNHSGGILGGISNGENLILKTYFKPTPSIFAKQESIDKFGNNLEFELKGRHDPCVGVRGSVVASAMVRLVLADCLLLNASANLNNLKNAYGLK.

R46 lines the NADP(+) pocket. Residues 122–124, 238–239, G278, 293–297, and R319 each bind FMN; these read RSS, NA, and KPTPS.

It belongs to the chorismate synthase family. Homotetramer. FMNH2 serves as cofactor.

The catalysed reaction is 5-O-(1-carboxyvinyl)-3-phosphoshikimate = chorismate + phosphate. The protein operates within metabolic intermediate biosynthesis; chorismate biosynthesis; chorismate from D-erythrose 4-phosphate and phosphoenolpyruvate: step 7/7. Functionally, catalyzes the anti-1,4-elimination of the C-3 phosphate and the C-6 proR hydrogen from 5-enolpyruvylshikimate-3-phosphate (EPSP) to yield chorismate, which is the branch point compound that serves as the starting substrate for the three terminal pathways of aromatic amino acid biosynthesis. This reaction introduces a second double bond into the aromatic ring system. The protein is Chorismate synthase of Campylobacter jejuni subsp. jejuni serotype O:6 (strain 81116 / NCTC 11828).